The sequence spans 383 residues: Arginine biosynthesis bifunctional protein ArgJ (383 aa).

Positions 146, 168, 179, 259, 378, and 383 each coordinate substrate. Threonine 179 functions as the Nucleophile in the catalytic mechanism.

It belongs to the ArgJ family. As to quaternary structure, heterotetramer of two alpha and two beta chains.

The protein localises to the cytoplasm. The enzyme catalyses N(2)-acetyl-L-ornithine + L-glutamate = N-acetyl-L-glutamate + L-ornithine. It carries out the reaction L-glutamate + acetyl-CoA = N-acetyl-L-glutamate + CoA + H(+). The protein operates within amino-acid biosynthesis; L-arginine biosynthesis; L-ornithine and N-acetyl-L-glutamate from L-glutamate and N(2)-acetyl-L-ornithine (cyclic): step 1/1. It participates in amino-acid biosynthesis; L-arginine biosynthesis; N(2)-acetyl-L-ornithine from L-glutamate: step 1/4. Its function is as follows. Catalyzes two activities which are involved in the cyclic version of arginine biosynthesis: the synthesis of N-acetylglutamate from glutamate and acetyl-CoA as the acetyl donor, and of ornithine by transacetylation between N(2)-acetylornithine and glutamate. This chain is Arginine biosynthesis bifunctional protein ArgJ, found in Streptomyces coelicolor (strain ATCC BAA-471 / A3(2) / M145).